Here is a 242-residue protein sequence, read N- to C-terminus: DNA repair protein RecO (242 aa).

The protein belongs to the RecO family. In terms of assembly, monomer.

In terms of biological role, involved in DNA repair and RecF pathway recombination. The chain is DNA repair protein RecO from Salmonella agona (strain SL483).